The following is a 328-amino-acid chain: Malate dehydrogenase (328 aa).

Residue 12–18 (GAAGQIG) participates in NAD(+) binding. The substrate site is built by Arg95 and Arg101. NAD(+)-binding positions include Asn108, Gln115, and 132 to 134 (VGN). Substrate is bound by residues Asn134 and Arg165. The active-site Proton acceptor is the His190.

Belongs to the LDH/MDH superfamily. MDH type 2 family.

The enzyme catalyses (S)-malate + NAD(+) = oxaloacetate + NADH + H(+). Catalyzes the reversible oxidation of malate to oxaloacetate. This is Malate dehydrogenase from Polaromonas sp. (strain JS666 / ATCC BAA-500).